The primary structure comprises 143 residues: Zinc-containing ferredoxin (143 aa).

The segment at 13-60 is N-terminal extension; it reads PIDEHFLENDKDYPVTGQHNGHDVRAEGMQRLDADGKPYPTKLGIHGT. Residues H31, H34, and H58 each contribute to the Zn(2+) site. 4Fe-4S ferredoxin-type domains are found at residues 60-89 and 115-143; these read THVA…WNLN and KCDP…KITP. Residues C69 and C75 each coordinate [3Fe-4S] cluster. C79 lines the [4Fe-4S] cluster pocket. D117 provides a ligand contact to Zn(2+). Residues C124, C127, and C130 each coordinate [4Fe-4S] cluster. C134 is a [3Fe-4S] cluster binding site.

[3Fe-4S] cluster is required as a cofactor. It depends on [4Fe-4S] cluster as a cofactor. The cofactor is Zn(2+).

In terms of biological role, ferredoxins are iron-sulfur proteins that transfer electrons in a wide variety of metabolic reactions. The polypeptide is Zinc-containing ferredoxin (zfx) (Thermoplasma acidophilum (strain ATCC 25905 / DSM 1728 / JCM 9062 / NBRC 15155 / AMRC-C165)).